Here is a 398-residue protein sequence, read N- to C-terminus: Phosphoglycerate kinase (398 aa).

Residues 21–23, Arg36, 59–62, Arg119, and Arg157 contribute to the substrate site; these read DFN and HLGR. ATP-binding positions include Lys208, Gly296, Glu327, and 354 to 357; that span reads GGDS.

It belongs to the phosphoglycerate kinase family. As to quaternary structure, monomer.

Its subcellular location is the cytoplasm. The catalysed reaction is (2R)-3-phosphoglycerate + ATP = (2R)-3-phospho-glyceroyl phosphate + ADP. It participates in carbohydrate degradation; glycolysis; pyruvate from D-glyceraldehyde 3-phosphate: step 2/5. The polypeptide is Phosphoglycerate kinase (Streptococcus pneumoniae (strain Taiwan19F-14)).